We begin with the raw amino-acid sequence, 375 residues long: Probable aminomethyltransferase (375 aa).

The protein belongs to the GcvT family. As to quaternary structure, the glycine cleavage system is composed of four proteins: P, T, L and H.

The catalysed reaction is N(6)-[(R)-S(8)-aminomethyldihydrolipoyl]-L-lysyl-[protein] + (6S)-5,6,7,8-tetrahydrofolate = N(6)-[(R)-dihydrolipoyl]-L-lysyl-[protein] + (6R)-5,10-methylene-5,6,7,8-tetrahydrofolate + NH4(+). The glycine cleavage system catalyzes the degradation of glycine. The polypeptide is Probable aminomethyltransferase (Aeropyrum pernix (strain ATCC 700893 / DSM 11879 / JCM 9820 / NBRC 100138 / K1)).